The chain runs to 131 residues: Predicted GPI-anchored protein 26 (131 aa).

An N-terminal signal peptide occupies residues 1–18 (MHFSKIIAGSALSSVALA). N-linked (GlcNAc...) asparagine glycosylation is found at asparagine 22 and asparagine 104. Glycine 110 is lipidated: GPI-anchor amidated glycine. Residues 111–131 (AGSKNVASALVGVVAIAAAMM) constitute a propeptide, removed in mature form.

Its subcellular location is the cell membrane. In terms of biological role, GPI-anchored protein involved in proper cell wall integrity. Does not seem to be directly involved in the synthesis of the cell wall. Required for normal virulence in a mouse model of disseminated candidiasis. The sequence is that of Predicted GPI-anchored protein 26 (PGA26) from Candida albicans (strain SC5314 / ATCC MYA-2876) (Yeast).